Here is a 300-residue protein sequence, read N- to C-terminus: Tegument protein VP22 (300 aa).

The tract at residues 1 to 148 (MTSRRSVKSC…PARGRRPAQA (148 aa)) is disordered. Composition is skewed to basic and acidic residues over residues 10-22 (CPRE…HEEL) and 50-61 (PRGEVRFLHYDE). A Nuclear localization signal motif is present at residues 163-166 (GRTK). Residues 174–267 (KKLHFSTAPP…LVNPDAAQDV (94 aa)) form an interaction with gE region. Residues 232–244 (LNELLDLTTIRVT) carry the Nuclear export signal motif. Residues 269-292 (ATAAARGRPAGRAAATARAPARSA) are compositionally biased toward low complexity. The disordered stretch occupies residues 269 to 300 (ATAAARGRPAGRAAATARAPARSASRPRRPLE).

This sequence belongs to the alphaherpesvirinae VP22 tegument protein family. In terms of assembly, interacts with gE (via C-terminus); this interaction is necessary for the recruitment of VP22 to the Golgi and its packaging into virions. Interacts with gM (via C-terminus). Interacts with VP16; this interaction allows the formation of a tripartite complex composed of VP16, VP22 and UL41/VHS. Interacts with the capsid-binding protein UL16. Interacts with host CGAS. Post-translationally, highly phosphorylated in the host cell. Packaging is selective for underphosphorylated forms.

The protein resides in the virion tegument. It is found in the host cytoplasm. It localises to the host nucleus. Its subcellular location is the host Golgi apparatus. Its function is as follows. Tegument protein that plays different roles during the time course of infection. Participates in both the accumulation of viral mRNAs and viral protein translation at late time of infection. Modulates the RNase activity of the virion host shutoff protein UL41 probably to ensure necessary levels of key cellular mRNAs and proteins. Plays a role in microtubule reorganization that occurs after viral infection by stabilizing microtubule network. Plays a role in the inhibition of host innate immune system by targeting the CGAS enzymatic activity which is the principal cytosolic DNA sensor that detects invading viral DNA. Acts by mediating disruption of liquid-like droplets in which CGAS is activated, thereby preventing CGAS activity. The chain is Tegument protein VP22 from Homo sapiens (Human).